A 168-amino-acid chain; its full sequence is Crossover junction endodeoxyribonuclease RuvC (168 aa).

Residues Asp-8, Glu-68, and Asp-140 contribute to the active site. Mg(2+)-binding residues include Asp-8, Glu-68, and Asp-140.

Belongs to the RuvC family. As to quaternary structure, homodimer which binds Holliday junction (HJ) DNA. The HJ becomes 2-fold symmetrical on binding to RuvC with unstacked arms; it has a different conformation from HJ DNA in complex with RuvA. In the full resolvosome a probable DNA-RuvA(4)-RuvB(12)-RuvC(2) complex forms which resolves the HJ. Mg(2+) serves as cofactor.

The protein localises to the cytoplasm. The catalysed reaction is Endonucleolytic cleavage at a junction such as a reciprocal single-stranded crossover between two homologous DNA duplexes (Holliday junction).. In terms of biological role, the RuvA-RuvB-RuvC complex processes Holliday junction (HJ) DNA during genetic recombination and DNA repair. Endonuclease that resolves HJ intermediates. Cleaves cruciform DNA by making single-stranded nicks across the HJ at symmetrical positions within the homologous arms, yielding a 5'-phosphate and a 3'-hydroxyl group; requires a central core of homology in the junction. The consensus cleavage sequence is 5'-(A/T)TT(C/G)-3'. Cleavage occurs on the 3'-side of the TT dinucleotide at the point of strand exchange. HJ branch migration catalyzed by RuvA-RuvB allows RuvC to scan DNA until it finds its consensus sequence, where it cleaves and resolves the cruciform DNA. This chain is Crossover junction endodeoxyribonuclease RuvC, found in Gluconacetobacter diazotrophicus (strain ATCC 49037 / DSM 5601 / CCUG 37298 / CIP 103539 / LMG 7603 / PAl5).